A 144-amino-acid polypeptide reads, in one-letter code: Deoxyuridine 5'-triphosphate nucleotidohydrolase (144 aa).

Substrate contacts are provided by residues 63 to 65 (RSG), Asn76, and 80 to 82 (TID).

The protein belongs to the dUTPase family. Requires Mg(2+) as cofactor.

It catalyses the reaction dUTP + H2O = dUMP + diphosphate + H(+). The protein operates within pyrimidine metabolism; dUMP biosynthesis; dUMP from dCTP (dUTP route): step 2/2. Functionally, this enzyme is involved in nucleotide metabolism: it produces dUMP, the immediate precursor of thymidine nucleotides and it decreases the intracellular concentration of dUTP so that uracil cannot be incorporated into DNA. The chain is Deoxyuridine 5'-triphosphate nucleotidohydrolase from Bacteroides fragilis (strain YCH46).